Consider the following 486-residue polypeptide: MEATPTPADLFSEDYLVDTLDGLTVDDQQAVLASLSFSKFLKHAKVRDWCAQAKIQPSMPALRMAYNYFLFSKVGEFIGSEDVCNFFVDRVFGGVRLLDVASVYAACSQMNAHQRHHICCLVERATSSQSLNPVWDALRDGIISSSKFHWAVKQQNTSKKIFSPWPITNNHFVAGPLAFGLRCEEVVKTLLATLLHPDEANCLDYGFMQSPQNGIFGVSLDFAANVKTDTEGRLQFDPNCKVYEIKCRFKYTFAKMECDPIYAAYQRLYEAPGKLALKDFFYSISKPAVEYVGLGKLPSESDYLVAYDQEWEACPRKKRKLTPLHNLIRECILHNSTTESDVYVLTDPQDTRGQISIKARFKANLFVNVRHSYFYQVLLQSSIVEEYIGLDSGIPRLGSPKYYIATGFFRKRGYQDPVNCTIGGDALDPHVEIPTLLIVTPVYFPRGAKHRLLHQAANFWSRSAKDTFPYIKWDFSYLSANVPHSP.

Belongs to the herpesviridae alkaline nuclease family. As to quaternary structure, forms a complex with the DNA polymerase, the DNA polymerase processivity factor, and the major DNA binding protein.

It localises to the host nucleus. Its subcellular location is the host cytoplasm. In terms of biological role, plays a role in processing non linear or branched viral DNA intermediates in order to promote the production of mature packaged unit-length linear progeny viral DNA molecules. Exhibits endonuclease and exonuclease activities and accepts both double-stranded and single-stranded DNA as substrate. Exonuclease digestion of DNA is in the 5'-&gt; 3' direction and the products are 5'-monophosphate nucleosides. Additionally, forms a recombinase with the major DNA-binding protein, which displays strand exchange activity. Also acts as a cytoplasmic RNA endonuclease that induces degradation of the majority of the cellular messenger RNAs during early lytic infection. The resulting inhibition of cellular protein synthesis serves to ensure maximal viral gene expression and evasion from host immune response. Internally cleaves host mRNAs which are then degraded by the cellular exonuclease XRN1. Bypasses therefore the regulatory steps of deadenylation and decapping normally required for XRN1 activation. In addition, inhibits host inflammasome activation to promote viral lytic replication by interacting with host AIM2 and disrupting its polymerization. In Human herpesvirus 8 type P (isolate GK18) (HHV-8), this protein is Shutoff alkaline exonuclease (ORF37).